A 237-amino-acid polypeptide reads, in one-letter code: UDP-2,3-diacylglucosamine hydrolase (237 aa).

Mn(2+) is bound by residues Asp9, His11, Asp42, Asn80, and His115. Residue 80–81 (NR) coordinates substrate. Positions 123, 161, 165, 168, and 196 each coordinate substrate. 2 residues coordinate Mn(2+): His196 and His198.

The protein belongs to the LpxH family. Requires Mn(2+) as cofactor.

Its subcellular location is the cell inner membrane. The enzyme catalyses UDP-2-N,3-O-bis[(3R)-3-hydroxytetradecanoyl]-alpha-D-glucosamine + H2O = 2-N,3-O-bis[(3R)-3-hydroxytetradecanoyl]-alpha-D-glucosaminyl 1-phosphate + UMP + 2 H(+). The protein operates within glycolipid biosynthesis; lipid IV(A) biosynthesis; lipid IV(A) from (3R)-3-hydroxytetradecanoyl-[acyl-carrier-protein] and UDP-N-acetyl-alpha-D-glucosamine: step 4/6. Hydrolyzes the pyrophosphate bond of UDP-2,3-diacylglucosamine to yield 2,3-diacylglucosamine 1-phosphate (lipid X) and UMP by catalyzing the attack of water at the alpha-P atom. Involved in the biosynthesis of lipid A, a phosphorylated glycolipid that anchors the lipopolysaccharide to the outer membrane of the cell. In Haemophilus influenzae (strain PittGG), this protein is UDP-2,3-diacylglucosamine hydrolase.